Here is a 167-residue protein sequence, read N- to C-terminus: Small ribosomal subunit protein uS5 (167 aa).

One can recognise an S5 DRBM domain in the interval 12–75 (LEERVVTINR…EDAKKNMVLV (64 aa)).

This sequence belongs to the universal ribosomal protein uS5 family. Part of the 30S ribosomal subunit. Contacts proteins S4 and S8.

With S4 and S12 plays an important role in translational accuracy. Its function is as follows. Located at the back of the 30S subunit body where it stabilizes the conformation of the head with respect to the body. The chain is Small ribosomal subunit protein uS5 from Listeria monocytogenes serotype 4b (strain F2365).